The chain runs to 384 residues: Dual-specificity RNA methyltransferase RlmN (384 aa).

E105 functions as the Proton acceptor in the catalytic mechanism. Positions 111–350 (EDDRATLCVS…TIVRKTRGDD (240 aa)) constitute a Radical SAM core domain. Residues C118 and C355 are joined by a disulfide bond. 3 residues coordinate [4Fe-4S] cluster: C125, C129, and C132. S-adenosyl-L-methionine-binding positions include 179–180 (GE), S211, 233–235 (SLH), and N312. Residue C355 is the S-methylcysteine intermediate of the active site.

Belongs to the radical SAM superfamily. RlmN family. [4Fe-4S] cluster is required as a cofactor.

It is found in the cytoplasm. It carries out the reaction adenosine(2503) in 23S rRNA + 2 reduced [2Fe-2S]-[ferredoxin] + 2 S-adenosyl-L-methionine = 2-methyladenosine(2503) in 23S rRNA + 5'-deoxyadenosine + L-methionine + 2 oxidized [2Fe-2S]-[ferredoxin] + S-adenosyl-L-homocysteine. The enzyme catalyses adenosine(37) in tRNA + 2 reduced [2Fe-2S]-[ferredoxin] + 2 S-adenosyl-L-methionine = 2-methyladenosine(37) in tRNA + 5'-deoxyadenosine + L-methionine + 2 oxidized [2Fe-2S]-[ferredoxin] + S-adenosyl-L-homocysteine. In terms of biological role, specifically methylates position 2 of adenine 2503 in 23S rRNA and position 2 of adenine 37 in tRNAs. m2A2503 modification seems to play a crucial role in the proofreading step occurring at the peptidyl transferase center and thus would serve to optimize ribosomal fidelity. This is Dual-specificity RNA methyltransferase RlmN from Shigella boydii serotype 18 (strain CDC 3083-94 / BS512).